The sequence spans 95 residues: Small ribosomal subunit protein bS18 (95 aa).

It belongs to the bacterial ribosomal protein bS18 family. As to quaternary structure, part of the 30S ribosomal subunit. Forms a tight heterodimer with protein bS6.

Its function is as follows. Binds as a heterodimer with protein bS6 to the central domain of the 16S rRNA, where it helps stabilize the platform of the 30S subunit. This chain is Small ribosomal subunit protein bS18, found in Rickettsia akari (strain Hartford).